The primary structure comprises 557 residues: Phosphoribosylaminoimidazole carboxylase, chloroplastic (557 aa).

One can recognise an ATP-grasp domain in the interval 108-293 (KVALLPAWIP…QFEQHLPAVV (186 aa)). Position 132–189 (132–189 (WDSLDIHFMIKSRRLAYDGRGNFVAKSEEELSSAVDALGGFDRGLYAEKWAPFVKELA)) interacts with ATP. Residues 387-557 (CSTLLGFIMG…HGWESYLKNS (171 aa)) are AIR carboxylase catalytic subunit.

In the C-terminal section; belongs to the AIR carboxylase family. Class I subfamily.

Its subcellular location is the plastid. It localises to the chloroplast. It catalyses the reaction 5-amino-1-(5-phospho-D-ribosyl)imidazole-4-carboxylate + H(+) = 5-amino-1-(5-phospho-beta-D-ribosyl)imidazole + CO2. It participates in purine metabolism; IMP biosynthesis via de novo pathway; 5-amino-1-(5-phospho-D-ribosyl)imidazole-4-carboxylate from 5-amino-1-(5-phospho-D-ribosyl)imidazole (carboxylase route): step 1/1. This Vigna aconitifolia (Moth bean) protein is Phosphoribosylaminoimidazole carboxylase, chloroplastic (PURKE).